Here is a 135-residue protein sequence, read N- to C-terminus: Large ribosomal subunit protein uL16c (135 aa).

Belongs to the universal ribosomal protein uL16 family. Part of the 50S ribosomal subunit.

It is found in the plastid. It localises to the chloroplast. The protein is Large ribosomal subunit protein uL16c of Ranunculus macranthus (Large buttercup).